Reading from the N-terminus, the 103-residue chain is UPF0473 protein LVIS_1220 (103 aa).

Belongs to the UPF0473 family.

The sequence is that of UPF0473 protein LVIS_1220 from Levilactobacillus brevis (strain ATCC 367 / BCRC 12310 / CIP 105137 / JCM 1170 / LMG 11437 / NCIMB 947 / NCTC 947) (Lactobacillus brevis).